The sequence spans 588 residues: Cation channel sperm-associated protein 2 (588 aa).

Residues Met1–Ser106 lie on the Cytoplasmic side of the membrane. Residues Val107 to Leu129 traverse the membrane as a helical segment. Residues Met130–Trp138 are Extracellular-facing. Residues Pro139–Leu164 traverse the membrane as a helical segment. Topologically, residues Ala165–Asp173 are cytoplasmic. Residues Ala174–Pro198 traverse the membrane as a helical segment. Topologically, residues Ala199–Ser201 are extracellular. Residues Val202–Ala220 form a helical membrane-spanning segment. Topologically, residues Arg221–Lys237 are cytoplasmic. A helical membrane pass occupies residues Ser238–Phe260. Topologically, residues Phe261–Ser279 are extracellular. The segment at residues Asp280–Phe292 is an intramembrane region (helical; Pore-forming). The Extracellular segment spans residues Thr293–Arg312. Residues Val313–Val339 form a helical membrane-spanning segment. Residues Thr340 to Lys588 are Cytoplasmic-facing. Residues Ser376 to His512 form a disordered region. Acidic residues predominate over residues Asp390–Ser439. Over residues Glu440–Ala502 the composition is skewed to basic and acidic residues.

Belongs to the cation channel sperm-associated (TC 1.A.1.19) family. Component of the CatSper complex or CatSpermasome composed of the core pore-forming members CATSPER1, CATSPER2, CATSPER3 and CATSPER4 as well as auxiliary members CATSPERB, CATSPERG2, CATSPERD, CATSPERE, CATSPERZ, C2CD6/CATSPERT, SLCO6C1, TMEM249, TMEM262 and EFCAB9. HSPA1 may be an additional auxiliary complex member. The core complex members CATSPER1, CATSPER2, CATSPER3 and CATSPER4 form a heterotetrameric channel. The auxiliary CATSPERB, CATSPERG2, CATSPERD and CATSPERE subunits form a pavilion-like structure over the pore which stabilizes the complex through interactions with CATSPER4, CATSPER3, CATSPER1 and CATSPER2 respectively. SLCO6C1 interacts with CATSPERE and TMEM262/CATSPERH interacts with CATSPERB, further stabilizing the complex. C2CD6/CATSPERT interacts at least with CATSPERD and is required for targeting the CatSper complex in the flagellar membrane. Interacts with Ca(v)3.3/CACNA1I, leading to suppression of T-type calcium channel activity. In terms of tissue distribution, testis-specific.

The protein resides in the cell projection. It is found in the cilium. It localises to the flagellum membrane. The catalysed reaction is Ca(2+)(in) = Ca(2+)(out). In contrast to the human ortholog, not activated by progesterone. Activated by intracellular alkalinization. Functionally, pore-forming subunit of the CatSper complex, a sperm-specific voltage-gated calcium channel that plays a central role in sperm cell hyperactivation. Controls calcium entry to mediate the hyperactivated motility, a step needed for sperm motility which is essential late in the preparation of sperm for fertilization. In Mus musculus (Mouse), this protein is Cation channel sperm-associated protein 2 (Catsper2).